A 235-amino-acid chain; its full sequence is RNA-free ribonuclease P (235 aa).

It belongs to the HARP family.

The catalysed reaction is Endonucleolytic cleavage of RNA, removing 5'-extranucleotides from tRNA precursor.. RNA-free RNase P that catalyzes the removal of the 5'-leader sequence from pre-tRNA to produce the mature 5'-terminus. In Methanothrix thermoacetophila (strain DSM 6194 / JCM 14653 / NBRC 101360 / PT) (Methanosaeta thermophila), this protein is RNA-free ribonuclease P.